Reading from the N-terminus, the 256-residue chain is Small ribosomal subunit protein eS1B (256 aa).

Ala-2 carries the N-acetylalanine; partial modification.

The protein belongs to the eukaryotic ribosomal protein eS1 family. In terms of assembly, component of the small ribosomal subunit. Mature ribosomes consist of a small (40S) and a large (60S) subunit. The 40S subunit contains about 33 different proteins and 1 molecule of RNA (18S). The 60S subunit contains about 49 different proteins and 3 molecules of RNA (25S, 5.8S and 5S).

It localises to the cytoplasm. This is Small ribosomal subunit protein eS1B from Scheffersomyces stipitis (strain ATCC 58785 / CBS 6054 / NBRC 10063 / NRRL Y-11545) (Yeast).